Here is a 346-residue protein sequence, read N- to C-terminus: Glycerol-3-phosphate dehydrogenase [NAD(P)+] (346 aa).

NADPH contacts are provided by Ser-15, Trp-16, Arg-36, and Lys-110. Lys-110, Gly-139, and Ser-141 together coordinate sn-glycerol 3-phosphate. Residue Ala-143 participates in NADPH binding. Lys-194, Asp-247, Ser-257, Arg-258, and Asn-259 together coordinate sn-glycerol 3-phosphate. The active-site Proton acceptor is the Lys-194. Position 258 (Arg-258) interacts with NADPH. NADPH-binding residues include Val-282 and Glu-284.

This sequence belongs to the NAD-dependent glycerol-3-phosphate dehydrogenase family.

It is found in the cytoplasm. The enzyme catalyses sn-glycerol 3-phosphate + NAD(+) = dihydroxyacetone phosphate + NADH + H(+). It carries out the reaction sn-glycerol 3-phosphate + NADP(+) = dihydroxyacetone phosphate + NADPH + H(+). It participates in membrane lipid metabolism; glycerophospholipid metabolism. Functionally, catalyzes the reduction of the glycolytic intermediate dihydroxyacetone phosphate (DHAP) to sn-glycerol 3-phosphate (G3P), the key precursor for phospholipid synthesis. This Xylella fastidiosa (strain M23) protein is Glycerol-3-phosphate dehydrogenase [NAD(P)+].